The chain runs to 484 residues: Glucan endo-1,3-beta-glucosidase 5 (484 aa).

Residues 1–26 (MLFKGVFAVFFVITLLYASLLIEVEG) form the signal peptide. Asn102 is a glycosylation site (N-linked (GlcNAc...) asparagine). The active-site Proton donor is the Glu122. Residues Asn129 and Asn260 are each glycosylated (N-linked (GlcNAc...) asparagine). The active-site Nucleophile is Glu267. Cys366 and Cys428 are oxidised to a cystine. N-linked (GlcNAc...) asparagine glycosylation is present at Asn409. A lipid anchor (GPI-anchor amidated alanine) is attached at Ala460. A propeptide spans 461–484 (SAMMPITRSTAVLLLLSICLYIVL) (removed in mature form).

This sequence belongs to the glycosyl hydrolase 17 family. In terms of processing, contains two additional disulfide bonds.

It localises to the cell membrane. It carries out the reaction Hydrolysis of (1-&gt;3)-beta-D-glucosidic linkages in (1-&gt;3)-beta-D-glucans.. The sequence is that of Glucan endo-1,3-beta-glucosidase 5 from Arabidopsis thaliana (Mouse-ear cress).